Reading from the N-terminus, the 132-residue chain is Small ribosomal subunit protein uS8c (132 aa).

The protein belongs to the universal ribosomal protein uS8 family. As to quaternary structure, part of the 30S ribosomal subunit.

The protein resides in the plastid. The protein localises to the chloroplast. Its function is as follows. One of the primary rRNA binding proteins, it binds directly to 16S rRNA central domain where it helps coordinate assembly of the platform of the 30S subunit. In Acorus calamus (Sweet flag), this protein is Small ribosomal subunit protein uS8c (rps8).